The following is an 878-amino-acid chain: Leucine--tRNA ligase (878 aa).

A 'HIGH' region motif is present at residues P43 to H53. A 'KMSKS' region motif is present at residues K630 to S634. Position 633 (K633) interacts with ATP.

It belongs to the class-I aminoacyl-tRNA synthetase family.

It is found in the cytoplasm. The catalysed reaction is tRNA(Leu) + L-leucine + ATP = L-leucyl-tRNA(Leu) + AMP + diphosphate. In Rhodopseudomonas palustris (strain BisB5), this protein is Leucine--tRNA ligase.